Reading from the N-terminus, the 529-residue chain is Delayed-rectifier potassium channel regulatory subunit KCNS1 (529 aa).

Residues 1 to 217 are Cytoplasmic-facing; it reads MLMLLVRGTR…LTMENPGYSL (217 aa). A helical transmembrane segment spans residues 218-239; the sequence is PSKLFSCVSISVVLASIAAMCI. Topologically, residues 240 to 270 are extracellular; sequence HSLPEYQAREAAAAVAAVAAGRSPEGVRDDP. The chain crosses the membrane as a helical span at residues 271–293; sequence VLRRLEYFCIAWFSFEVSSRLLL. The Cytoplasmic segment spans residues 294–304; that stretch reads APSTRNFFCHP. The helical transmembrane segment at 305–322 threads the bilayer; that stretch reads LNLIDIVSVLPFYLTLLA. Over 323 to 340 the chain is Extracellular; it reads GVALGDQGGTGGKELGHL. A helical; Voltage-sensor membrane pass occupies residues 341–361; it reads GKVVQVFRLMRIFRVLKLARH. The Cytoplasmic portion of the chain corresponds to 362–376; sequence STGLRSLGATLKHSY. The chain crosses the membrane as a helical span at residues 377 to 398; sequence REVGILLLYLAVGVSVFSGVAY. The Extracellular portion of the chain corresponds to 399-411; the sequence is TAEKEEDVGFNTI. The segment at residues 412–423 is an intramembrane region (helical); it reads PACWWWGTVSMT. Residues 424–429 carry the Selectivity filter motif; it reads TVGYGD. The stretch at 424 to 431 is an intramembrane region; the sequence is TVGYGDVV. Over 432 to 438 the chain is Extracellular; the sequence is PVTVAGK. Residues 439 to 467 form a helical membrane-spanning segment; sequence LAASGCILGGILVVALPITIIFNKFSHFY. The Cytoplasmic portion of the chain corresponds to 468–529; it reads RRQKALEAAV…PSEPPHPQMY (62 aa). The interval 500–529 is disordered; the sequence is LETSREISQEGRSADLETQAPSEPPHPQMY. The span at 502–514 shows a compositional bias: basic and acidic residues; it reads TSREISQEGRSAD.

It belongs to the potassium channel family. S (TC 1.A.1.2) subfamily. Kv9.1/KCNS1 sub-subfamily. In terms of assembly, heterotetramer with KCNB1. Heterotetramer with KCNB2. Does not form homomultimers.

Its subcellular location is the cell membrane. Potassium channel regulatory subunit that modulate the delayed rectifier voltage-gated potassium channel activity of KCNB1 and KCNB2 by altering their kinetics, expression levels, and shifting the half-inactivation potential to more polarized values. While it does not form functional channels on its own, it can form functional heterotetrameric channels with KCNB1 and KCNB2. Each regulatory subunit has unique regulatory properties that can lead to extensive inhibition, significant changes in kinetics, and/or substantial shifts in the voltage dependencies of the inactivation process. The chain is Delayed-rectifier potassium channel regulatory subunit KCNS1 from Colobus guereza (Mantled guereza).